We begin with the raw amino-acid sequence, 183 residues long: uncharacterized protein (183 aa).

4 consecutive transmembrane segments (helical) span residues 13-35 (KALLRLNLIAIALLWLYPLLTYS), 60-82 (LLILPAVFSIAPAIILIITKLRF), 117-139 (FEPVLLLSLILSAGFLGMEYAIF), and 149-171 (LLFYIILIFVIAAPLFIFFLYLS).

It is found in the cell membrane. This is an uncharacterized protein from Archaeoglobus fulgidus (strain ATCC 49558 / DSM 4304 / JCM 9628 / NBRC 100126 / VC-16).